The primary structure comprises 184 residues: Elongation factor P (184 aa).

Belongs to the elongation factor P family.

Its subcellular location is the cytoplasm. It functions in the pathway protein biosynthesis; polypeptide chain elongation. In terms of biological role, involved in peptide bond synthesis. Stimulates efficient translation and peptide-bond synthesis on native or reconstituted 70S ribosomes in vitro. Probably functions indirectly by altering the affinity of the ribosome for aminoacyl-tRNA, thus increasing their reactivity as acceptors for peptidyl transferase. The chain is Elongation factor P from Verminephrobacter eiseniae (strain EF01-2).